The following is a 184-amino-acid chain: MATSNQLTPGMTLSINNKLYRVESSVKVTVPKGTPFIKAKLKDLSNNEMVEKSFKLNQPIKDVSLIERRLEFLYPEGDEYLFLDVVNLDQVLVPAEIVSGKVNYLKEGVEIKAFFYGETIFAVELPQFLELMVAKTHSDDENDLANGAKIAILETGAKIEVPPFIETGDIIKVDTKTDEYIQRV.

The protein belongs to the elongation factor P family.

Its subcellular location is the cytoplasm. It participates in protein biosynthesis; polypeptide chain elongation. In terms of biological role, involved in peptide bond synthesis. Stimulates efficient translation and peptide-bond synthesis on native or reconstituted 70S ribosomes in vitro. Probably functions indirectly by altering the affinity of the ribosome for aminoacyl-tRNA, thus increasing their reactivity as acceptors for peptidyl transferase. This is Elongation factor P 1 (efp1) from Protochlamydia amoebophila (strain UWE25).